The sequence spans 358 residues: Prostaglandin E2 receptor EP2 subtype (358 aa).

The Extracellular portion of the chain corresponds to 1-23 (MGNASNDSQSEDCETRQWLPPGE). 2 N-linked (GlcNAc...) asparagine glycosylation sites follow: Asn3 and Asn6. The helical transmembrane segment at 24 to 47 (SPAISSVMFSAGVLGNLIALALLA) threads the bilayer. At 48–65 (RRWRGDVGCSAGRRSSLS) the chain is on the cytoplasmic side. The chain crosses the membrane as a helical span at residues 66-91 (LFHVLVTELVFTDLLGTCLISPVVLA). The Extracellular segment spans residues 92–111 (SYARNQTLVALAPESRACTY). Residue Asn96 is glycosylated (N-linked (GlcNAc...) asparagine). Cysteines 109 and 187 form a disulfide. A helical membrane pass occupies residues 112-132 (FAFAMTFFSLATMLMLFAMAL). Residues 133–151 (ERYLSIGHPYFYQRRVSRS) are Cytoplasmic-facing. A helical membrane pass occupies residues 152–176 (GGLAVLPVIYAVSLLFCSLPLLDYG). The Extracellular segment spans residues 177–198 (QYVQYCPGTWCFIRHGRTAYLQ). Residues 199-223 (LYATLLLLLIVSVLACNFSVILNLI) traverse the membrane as a helical segment. The Cytoplasmic portion of the chain corresponds to 224-262 (RMHRRSRRSRCGPSLGSGRGGPGARRRGERVSMAEETDH). Residues 231 to 253 (RSRCGPSLGSGRGGPGARRRGER) are disordered. The helical transmembrane segment at 263–286 (LILLAIMTITFAVCSLPFTIFAYM) threads the bilayer. Asn287 carries N-linked (GlcNAc...) asparagine glycosylation. Residues 287-299 (NETSSRKEKWDLQ) lie on the Extracellular side of the membrane. Residues 300-323 (ALRFLSINSIIDPWVFAILRPPVL) form a helical membrane-spanning segment. The Cytoplasmic portion of the chain corresponds to 324–358 (RLMRSVLCCRISLRTQDATQTSCSTQSDASKQADL).

Belongs to the G-protein coupled receptor 1 family. As to expression, placenta and lung.

The protein resides in the cell membrane. Its function is as follows. Receptor for prostaglandin E2 (PGE2). The activity of this receptor is mediated by G(s) proteins that stimulate adenylate cyclase. The subsequent raise in intracellular cAMP is responsible for the relaxing effect of this receptor on smooth muscle. In Homo sapiens (Human), this protein is Prostaglandin E2 receptor EP2 subtype (PTGER2).